A 201-amino-acid chain; its full sequence is Holliday junction branch migration complex subunit RuvA (201 aa).

The segment at 1–64 (MIGRLHGKII…EDAHLLFGFA (64 aa)) is domain I. The segment at 65 to 143 (QKQDRTLFRE…GVAQSDFFEE (79 aa)) is domain II. Residues 144-154 (HSVETIVATHS) form a flexible linker region. The segment at 154-201 (SHDPADEARDALVALGYKLADAEKMIKKVNKAGATSEQLIREALKASL) is domain III.

The protein belongs to the RuvA family. As to quaternary structure, homotetramer. Forms an RuvA(8)-RuvB(12)-Holliday junction (HJ) complex. HJ DNA is sandwiched between 2 RuvA tetramers; dsDNA enters through RuvA and exits via RuvB. An RuvB hexamer assembles on each DNA strand where it exits the tetramer. Each RuvB hexamer is contacted by two RuvA subunits (via domain III) on 2 adjacent RuvB subunits; this complex drives branch migration. In the full resolvosome a probable DNA-RuvA(4)-RuvB(12)-RuvC(2) complex forms which resolves the HJ.

Its subcellular location is the cytoplasm. In terms of biological role, the RuvA-RuvB-RuvC complex processes Holliday junction (HJ) DNA during genetic recombination and DNA repair, while the RuvA-RuvB complex plays an important role in the rescue of blocked DNA replication forks via replication fork reversal (RFR). RuvA specifically binds to HJ cruciform DNA, conferring on it an open structure. The RuvB hexamer acts as an ATP-dependent pump, pulling dsDNA into and through the RuvAB complex. HJ branch migration allows RuvC to scan DNA until it finds its consensus sequence, where it cleaves and resolves the cruciform DNA. The sequence is that of Holliday junction branch migration complex subunit RuvA from Actinobacillus pleuropneumoniae serotype 5b (strain L20).